We begin with the raw amino-acid sequence, 267 residues long: Tryptophan synthase alpha chain (267 aa).

Residues Glu49 and Asp60 each act as proton acceptor in the active site.

It belongs to the TrpA family. In terms of assembly, tetramer of two alpha and two beta chains.

It carries out the reaction (1S,2R)-1-C-(indol-3-yl)glycerol 3-phosphate + L-serine = D-glyceraldehyde 3-phosphate + L-tryptophan + H2O. Its pathway is amino-acid biosynthesis; L-tryptophan biosynthesis; L-tryptophan from chorismate: step 5/5. The alpha subunit is responsible for the aldol cleavage of indoleglycerol phosphate to indole and glyceraldehyde 3-phosphate. The chain is Tryptophan synthase alpha chain from Chloroflexus aggregans (strain MD-66 / DSM 9485).